The primary structure comprises 57 residues: MPAIQPPLYLTFLLLILLYLIITLYVWTILTINHKTAVRYAALYQRSCSRWGFDQSL.

At 1 to 8 (MPAIQPPL) the chain is on the virion surface side. Residues 9 to 29 (YLTFLLLILLYLIITLYVWTI) traverse the membrane as a helical segment. Over 30 to 57 (LTINHKTAVRYAALYQRSCSRWGFDQSL) the chain is Intravirion.

It belongs to the rubulavirus small hydrophobic protein family. As to quaternary structure, interacts with host TNFRSF1A, RIPK1 and IRAK1; these interactions interfere with host NF-kappa-B activation at the level of receptor complexes. Interacts with host protein UBQLN4.

The protein localises to the virion membrane. Its subcellular location is the host cell membrane. Plays a role in the inhibition of the host NF-kappa-B pathway. This inhibition occurs at the receptor level, by preventing the signaling of TNFR1 as well as IL-1R and TLR3. The protein is Small hydrophobic protein (SH) of Mumps virus (strain Enders) (MuV).